Here is a 156-residue protein sequence, read N- to C-terminus: 6,7-dimethyl-8-ribityllumazine synthase (156 aa).

5-amino-6-(D-ribitylamino)uracil contacts are provided by residues phenylalanine 22, 57–59, and 81–83; these read AYE and TVI. Position 86-87 (86-87) interacts with (2S)-2-hydroxy-3-oxobutyl phosphate; that stretch reads GT. The active-site Proton donor is histidine 89. Phenylalanine 114 is a 5-amino-6-(D-ribitylamino)uracil binding site. Residue arginine 128 coordinates (2S)-2-hydroxy-3-oxobutyl phosphate.

Belongs to the DMRL synthase family. As to quaternary structure, forms an icosahedral capsid composed of 60 subunits, arranged as a dodecamer of pentamers.

It catalyses the reaction (2S)-2-hydroxy-3-oxobutyl phosphate + 5-amino-6-(D-ribitylamino)uracil = 6,7-dimethyl-8-(1-D-ribityl)lumazine + phosphate + 2 H2O + H(+). It participates in cofactor biosynthesis; riboflavin biosynthesis; riboflavin from 2-hydroxy-3-oxobutyl phosphate and 5-amino-6-(D-ribitylamino)uracil: step 1/2. In terms of biological role, catalyzes the formation of 6,7-dimethyl-8-ribityllumazine by condensation of 5-amino-6-(D-ribitylamino)uracil with 3,4-dihydroxy-2-butanone 4-phosphate. This is the penultimate step in the biosynthesis of riboflavin. The protein is 6,7-dimethyl-8-ribityllumazine synthase of Citrobacter koseri (strain ATCC BAA-895 / CDC 4225-83 / SGSC4696).